A 108-amino-acid chain; its full sequence is Peptidyl-prolyl cis-trans isomerase FKBP1B (108 aa).

Residues 20–108 (GQTCVVHYTG…IFGVELLNLE (89 aa)) form the PPIase FKBP-type domain.

This sequence belongs to the FKBP-type PPIase family. FKBP1 subfamily. In terms of assembly, identified in a complex composed of RYR2, FKBP1B, PKA catalytic subunit, PRKAR2A, AKAP6, and the protein phosphatases PP2A and PP1. Interacts directly with RYR2.

It is found in the cytoplasm. Its subcellular location is the sarcoplasmic reticulum. It carries out the reaction [protein]-peptidylproline (omega=180) = [protein]-peptidylproline (omega=0). Inhibited by both FK506 and rapamycin. Its function is as follows. Has the potential to contribute to the immunosuppressive and toxic effects of FK506 and rapamycin. PPIases accelerate the folding of proteins. It catalyzes the cis-trans isomerization of proline imidic peptide bonds in oligopeptides. The polypeptide is Peptidyl-prolyl cis-trans isomerase FKBP1B (FKBP1B) (Oryctolagus cuniculus (Rabbit)).